Reading from the N-terminus, the 101-residue chain is uncharacterized protein (101 aa).

An N-terminal signal peptide occupies residues 1 to 18; that stretch reads MSINALLYVLSLALLIWT. A helical transmembrane segment spans residues 62-82; it reads FQFDSIPSSSLSLSPFPFLFF.

Its subcellular location is the membrane. This is an uncharacterized protein from Saccharomyces cerevisiae (strain ATCC 204508 / S288c) (Baker's yeast).